The chain runs to 140 residues: Nucleoside diphosphate kinase (140 aa).

ATP-binding residues include lysine 11, phenylalanine 59, arginine 87, threonine 93, arginine 104, and asparagine 114. Histidine 117 acts as the Pros-phosphohistidine intermediate in catalysis.

It belongs to the NDK family. In terms of assembly, homotetramer. Mg(2+) serves as cofactor.

The protein localises to the cytoplasm. It carries out the reaction a 2'-deoxyribonucleoside 5'-diphosphate + ATP = a 2'-deoxyribonucleoside 5'-triphosphate + ADP. The enzyme catalyses a ribonucleoside 5'-diphosphate + ATP = a ribonucleoside 5'-triphosphate + ADP. Its function is as follows. Major role in the synthesis of nucleoside triphosphates other than ATP. The ATP gamma phosphate is transferred to the NDP beta phosphate via a ping-pong mechanism, using a phosphorylated active-site intermediate. This is Nucleoside diphosphate kinase from Maricaulis maris (strain MCS10) (Caulobacter maris).